Consider the following 32-residue polypeptide: Ferredoxin (32 aa).

One can recognise a 2Fe-2S ferredoxin-type domain in the interval 3–32 (YKVRLLSEAEGIDVTIDCADDVYILDAAEE).

The protein belongs to the 2Fe2S plant-type ferredoxin family. [2Fe-2S] cluster serves as cofactor.

The protein resides in the plastid. The protein localises to the chloroplast. Its function is as follows. Ferredoxins are iron-sulfur proteins that transfer electrons in a wide variety of metabolic reactions. The chain is Ferredoxin from Porphyridium purpureum (Red alga).